The primary structure comprises 434 residues: Nicotinate phosphoribosyltransferase (434 aa).

His242 is modified (phosphohistidine; by autocatalysis).

Belongs to the NAPRTase family. Transiently phosphorylated on a His residue during the reaction cycle. Phosphorylation strongly increases the affinity for substrates and increases the rate of nicotinate D-ribonucleotide production. Dephosphorylation regenerates the low-affinity form of the enzyme, leading to product release.

The enzyme catalyses nicotinate + 5-phospho-alpha-D-ribose 1-diphosphate + ATP + H2O = nicotinate beta-D-ribonucleotide + ADP + phosphate + diphosphate. Its pathway is cofactor biosynthesis; NAD(+) biosynthesis; nicotinate D-ribonucleotide from nicotinate: step 1/1. Catalyzes the synthesis of beta-nicotinate D-ribonucleotide from nicotinate and 5-phospho-D-ribose 1-phosphate at the expense of ATP. This is Nicotinate phosphoribosyltransferase from Nitrobacter hamburgensis (strain DSM 10229 / NCIMB 13809 / X14).